The following is a 365-amino-acid chain: 5-hydroxytryptamine receptor 1F (365 aa).

The Extracellular segment spans residues Met1–Ile24. N-linked (GlcNAc...) asparagine glycosylation is found at Asn5 and Asn10. Residues Leu25 to Ile49 traverse the membrane as a helical segment. Topologically, residues Val50–Asn59 are cytoplasmic. Residues Tyr60 to Ile81 form a helical membrane-spanning segment. Residues Val82 to Cys96 lie on the Extracellular side of the membrane. Cysteines 96 and 172 form a disulfide. The helical transmembrane segment at Asp97–Leu119 threads the bilayer. Serotonin-binding residues include Asp103 and Cys107. A DRY motif; important for ligand-induced conformation changes motif is present at residues Asp120–Tyr122. The Cytoplasmic portion of the chain corresponds to Asp120–His139. Residues Ala140–Leu159 traverse the membrane as a helical segment. Topologically, residues Phe160–His178 are extracellular. The helical transmembrane segment at Ile179–Tyr202 threads the bilayer. The Cytoplasmic segment spans residues Lys203–Ala291. The helical transmembrane segment at Ala292–Val315 threads the bilayer. Topologically, residues Val316–Glu327 are extracellular. Residues Met328–Phe350 form a helical membrane-spanning segment. The short motif at Asn343 to Tyr347 is the NPxxY motif; important for ligand-induced conformation changes and signaling element. Over Asn351–Arg365 the chain is Cytoplasmic.

It belongs to the G-protein coupled receptor 1 family.

The protein localises to the cell membrane. Its function is as follows. G-protein coupled receptor for 5-hydroxytryptamine (serotonin). Also functions as a receptor for various alkaloids and psychoactive substances. Ligand binding causes a conformation change that triggers signaling via guanine nucleotide-binding proteins (G proteins) and modulates the activity of downstream effectors, such as adenylate cyclase. HTR1F is coupled to G(i)/G(o) G alpha proteins and mediates inhibitory neurotransmission by inhibiting adenylate cyclase activity. This Pan troglodytes (Chimpanzee) protein is 5-hydroxytryptamine receptor 1F (HTR1F).